The primary structure comprises 293 residues: Energy-coupling factor transporter ATP-binding protein EcfA2 (293 aa).

The region spanning 3 to 246 (ITFQKVEHRY…ADELEKIGVD (244 aa)) is the ABC transporter domain. 40-47 (GHTGSGKS) lines the ATP pocket.

Belongs to the ABC transporter superfamily. Energy-coupling factor EcfA family. In terms of assembly, forms a stable energy-coupling factor (ECF) transporter complex composed of 2 membrane-embedded substrate-binding proteins (S component), 2 ATP-binding proteins (A component) and 2 transmembrane proteins (T component).

It localises to the cell membrane. In terms of biological role, ATP-binding (A) component of a common energy-coupling factor (ECF) ABC-transporter complex. Unlike classic ABC transporters this ECF transporter provides the energy necessary to transport a number of different substrates. This is Energy-coupling factor transporter ATP-binding protein EcfA2 from Bacillus cereus (strain ATCC 10987 / NRS 248).